We begin with the raw amino-acid sequence, 585 residues long: Amyloid protein-binding protein 2 (585 aa).

TPR repeat units lie at residues 50–83 (QGRLCQLGSEFCELEVFAKVLRALDKRHLLHHCF), 120–153 (IQVGFVLGGFLSDAGWYSDAEKVFLSCLQLCTLH), 206–239 (AALYGELCALLFAKSHYDEAYKWCVEAMKEITAG), 288–321 (SDTLLDYGFYLLNVDNICQSVAIYQAALDIRQSV), 333–367 (HEDLAYSSYVHQYSSGKFDNALFHAERAIGIITHI), 429–462 (AKHYGNLGRLYQSMRKFKEAEEMHIKAIQIKEQL), 471–505 (ALSVGHLASLYNYDMNQYENAEKLYLRSIAIGKKL), and 514–547 (EYDYRGLIKLYNSIGNYEKVFEYHNVLSNWNRLR).

As to quaternary structure, component of a CRL2 E3 ubiquitin-protein ligase complex, also named ECS (Elongin BC-CUL2/5-SOCS-box protein) complex, composed of CUL2, Elongin BC (ELOB and ELOC), RBX1 and substrate-specific adapter APPBP2. Interacts with APP; APP interaction inhibits the E3 ubiquitin-protein ligase activity of the CRL2(APPBP2) complex. Post-translationally, rapidly degraded by the proteasome upon overexpression of a C-terminal fragment of APP.

The protein localises to the nucleus. The protein resides in the cytoplasm. Its subcellular location is the cytoskeleton. It is found in the membrane. It participates in protein modification; protein ubiquitination. With respect to regulation, E3 ubiquitin-protein ligase activity of the CRL2(APPBP2) complex is inhibited by APP. Its function is as follows. Substrate-recognition component of a Cul2-RING (CRL2) E3 ubiquitin-protein ligase complex of the DesCEND (destruction via C-end degrons) pathway, which recognizes a C-degron located at the extreme C terminus of target proteins, leading to their ubiquitination and degradation. The C-degron recognized by the DesCEND pathway is usually a motif of less than ten residues and can be present in full-length proteins, truncated proteins or proteolytically cleaved forms. The CRL2(APPBP2) complex specifically recognizes proteins with a -Arg-Xaa-Xaa-Gly degron at the C-terminus, leading to their ubiquitination and degradation. The CRL2(APPBP2) complex mediates ubiquitination and degradation of truncated SELENOV selenoproteins produced by failed UGA/Sec decoding, which end with a -Arg-Xaa-Xaa-Gly degron. May play a role in intracellular protein transport: may be involved in the translocation of APP along microtubules toward the cell surface. The chain is Amyloid protein-binding protein 2 from Mus musculus (Mouse).